The sequence spans 304 residues: Rhodopsin (304 aa).

Residues 1-13 (YEYPQYYLVNPAA) are Extracellular-facing. The chain crosses the membrane as a helical span at residues 14–38 (YAALGAYMFLLILVGFPINFLTLYV). Residues 39-50 (TIEHKKLRTPLN) lie on the Cytoplasmic side of the membrane. The chain crosses the membrane as a helical span at residues 51-73 (YILLNLAVANLFMVFGGFTTTMF). The Extracellular portion of the chain corresponds to 74-87 (TSIRGYFVLGHLGC). The cysteines at positions 87 and 164 are disulfide-linked. Residues 88–110 (NLEGFFATLSGEIALWSLVVLAI) traverse the membrane as a helical segment. The short motif at 111 to 113 (ERW) is the 'Ionic lock' involved in activated form stabilization element. Residues 111–129 (ERWVVVCKPISNFRFGENH) lie on the Cytoplasmic side of the membrane. The helical transmembrane segment at 130–150 (AIMGLAFTWTMAMACAAPPLV) threads the bilayer. Residues 151–179 (GWSRYIPEGMQCSCGIDYYTRAEGFNNES) lie on the Extracellular side of the membrane. N-linked (GlcNAc...) asparagine glycosylation occurs at asparagine 177. A helical transmembrane segment spans residues 180–201 (FVVYMFTCHFMTPLTIVFFCYG). Residues 202–229 (RLLCAVKEAAAAQQESETTQRAEREVTR) are Cytoplasmic-facing. The chain crosses the membrane as a helical span at residues 230 to 251 (MVVIMVIAFLICWCPYAGVAWF). At 252 to 263 (IFTHQGSEFGPV) the chain is on the extracellular side. A helical membrane pass occupies residues 264–285 (FMTIPAFFAKSSSIYNPMIYIC). At lysine 273 the chain carries N6-(retinylidene)lysine. The Cytoplasmic portion of the chain corresponds to 286-304 (LNKQFRHCMITTLCCGKKA). Residues cysteine 299 and cysteine 300 are each lipidated (S-palmitoyl cysteine).

It belongs to the G-protein coupled receptor 1 family. Opsin subfamily. Post-translationally, phosphorylated on some or all of the serine and threonine residues present in the C-terminal region. In terms of processing, contains one covalently linked retinal chromophore.

It is found in the membrane. Its subcellular location is the cell projection. The protein resides in the cilium. It localises to the photoreceptor outer segment. Functionally, photoreceptor required for image-forming vision at low light intensity. While most salt water fish species use retinal as chromophore, most freshwater fish use 3-dehydroretinal, or a mixture of retinal and 3-dehydroretinal. Light-induced isomerization of 11-cis to all-trans retinal triggers a conformational change that activates signaling via G-proteins. Subsequent receptor phosphorylation mediates displacement of the bound G-protein alpha subunit by arrestin and terminates signaling. This chain is Rhodopsin (rho), found in Ictalurus punctatus (Channel catfish).